A 576-amino-acid chain; its full sequence is Putative diflavin flavoprotein A 1 (576 aa).

The tract at residues 48–240 (RNGTTYNSFL…LAIKTVATGH (193 aa)) is zinc metallo-hydrolase. Fe cation is bound by residues His97, Glu99, Asp101, His164, Asp183, and His240. One can recognise a Flavodoxin-like domain in the interval 269–431 (VALFYAEDYG…DLEKALGRIS (163 aa)). The segment at 432 to 576 (TGLYIITTKK…VHHRKVGNHY (145 aa)) is flavodoxin-reductase-like.

It in the N-terminal section; belongs to the zinc metallo-hydrolase group 3 family. In the C-terminal section; belongs to the flavodoxin reductase family. Fe cation is required as a cofactor.

In terms of biological role, mediates electron transfer from NADH to oxygen, reducing it to water. This modular protein has 3 redox cofactors, in other organisms the same activity requires 2 or 3 proteins. The sequence is that of Putative diflavin flavoprotein A 1 (dfa1) from Nostoc sp. (strain PCC 7120 / SAG 25.82 / UTEX 2576).